We begin with the raw amino-acid sequence, 130 residues long: Small ribosomal subunit protein uS8 (130 aa).

Belongs to the universal ribosomal protein uS8 family. In terms of assembly, part of the 30S ribosomal subunit.

One of the primary rRNA binding proteins, it binds directly to 16S rRNA central domain where it helps coordinate assembly of the platform of the 30S subunit. The polypeptide is Small ribosomal subunit protein uS8 (Halobacterium salinarum (strain ATCC 29341 / DSM 671 / R1)).